Consider the following 241-residue polypeptide: MTYKLKISYDGSFFRGYAKQKDENLITVQSELEKYLSLFFNTKISTFGSGRTDKYVHAIDQTVSFKCDSDYDPKSIQNFLNSKLTNIYVNSIEKVPNSFHARFSIKSKTYMYVINTGEFDVFKQRYEYQYNKSIDIKKCEDIINLFIGTKDFLSFSTSKLENTTRTIRWIRIIKKNKKIYIFINGEGFLRNMVRMIVGIILTYCENKITYQEVLDLFKNPKKGSAVIKVPGCGLYLYRTIY.

Asp-53 (nucleophile) is an active-site residue. Tyr-110 serves as a coordination point for substrate.

Belongs to the tRNA pseudouridine synthase TruA family. In terms of assembly, homodimer.

It catalyses the reaction uridine(38/39/40) in tRNA = pseudouridine(38/39/40) in tRNA. Its function is as follows. Formation of pseudouridine at positions 38, 39 and 40 in the anticodon stem and loop of transfer RNAs. The chain is tRNA pseudouridine synthase A from Malacoplasma penetrans (strain HF-2) (Mycoplasma penetrans).